The sequence spans 62 residues: Small ribosomal subunit protein uS14 (62 aa).

C25, C28, C41, and C44 together coordinate Zn(2+).

This sequence belongs to the universal ribosomal protein uS14 family. Zinc-binding uS14 subfamily. Part of the 30S ribosomal subunit. Contacts proteins S3 and S10. The cofactor is Zn(2+).

In terms of biological role, binds 16S rRNA, required for the assembly of 30S particles and may also be responsible for determining the conformation of the 16S rRNA at the A site. The sequence is that of Small ribosomal subunit protein uS14 from Hydrogenobaculum sp. (strain Y04AAS1).